Here is a 297-residue protein sequence, read N- to C-terminus: Mitochondrial ornithine transporter 1 (297 aa).

Solcar repeat units lie at residues 15–97 (GSPA…LKLT), 102–205 (DPTL…FKKN), and 212–292 (KPHF…FRET). 6 helical membrane-spanning segments follow: residues 18 to 38 (ASTF…GYPL), 72 to 91 (GLTL…FTVY), 107 to 127 (YFIS…PFEY), 184 to 204 (HLTR…TFKK), 215 to 235 (FAYA…VFPV), and 264 to 285 (IYRG…NFTL).

This sequence belongs to the mitochondrial carrier (TC 2.A.29) family.

It localises to the mitochondrion inner membrane. In terms of biological role, required for arginine biosynthesis. Transports ornithine synthesized from glutamate in the mitochondrial matrix to the cytosol, where it is converted to arginine. The polypeptide is Mitochondrial ornithine transporter 1 (Schizosaccharomyces pombe (strain 972 / ATCC 24843) (Fission yeast)).